The primary structure comprises 89 residues: Large ribosomal subunit protein uL30 (89 aa).

It belongs to the universal ribosomal protein uL30 family. In terms of assembly, part of the 50S ribosomal subunit.

This Myxococcus xanthus (strain DK1622) protein is Large ribosomal subunit protein uL30.